Here is a 415-residue protein sequence, read N- to C-terminus: Dibenzothiophene monooxygenase (415 aa).

FMN contacts are provided by residues tyrosine 94, asparagine 127 to asparagine 132, lysine 157 to serine 161, arginine 280, isoleucine 365 to glycine 366, and threonine 387. A lid loop region spans residues serine 129–lysine 140.

Belongs to the DszC flavin monooxygenase family. In terms of assembly, homotetramer.

It localises to the cytoplasm. The enzyme catalyses dibenzothiophene + 2 FMNH2 + 2 O2 = dibenzothiophene 5,5-dioxide + 2 FMN + 2 H2O + 2 H(+). It catalyses the reaction dibenzothiophene + FMNH2 + O2 = dibenzothiophene 5-oxide + FMN + H2O + H(+). It carries out the reaction dibenzothiophene 5-oxide + FMNH2 + O2 = dibenzothiophene 5,5-dioxide + FMN + H2O + H(+). Its pathway is sulfur metabolism; dibenzothiophene degradation. Its activity is regulated as follows. Inhibited at high concentrations of FMN or FAD. Its function is as follows. Catalyzes the first step of the '4S' desulfurization pathway that removes covalently bound sulfur from dibenzothiophene (DBT) without breaking carbon-carbon bonds. Sulfur dioxygenase which converts DBT to DBT-sulfone (DBTO2 or DBT 5,5-dioxide) probably in a stepwise manner. In addition to FMNH2 can also use FAD (although FAD is less efficient). The protein is Dibenzothiophene monooxygenase of Mycolicibacterium goodii (Mycobacterium goodii).